A 549-amino-acid polypeptide reads, in one-letter code: Biotin-dependent acetyl-/propionyl-coenzyme A carboxylase beta5 subunit (549 aa).

Residues 25–281 (TAGKLAELHK…NNFTDAPRYS (257 aa)) enclose the CoA carboxyltransferase N-terminal domain. Residues 295–542 (AKDLELDTLI…ERKIAHLPPK (248 aa)) form the CoA carboxyltransferase C-terminal domain.

The protein belongs to the AccD/PCCB family. As to quaternary structure, the biotin-dependent acyl-CoA carboxylase complex is composed of AccA3, which contains the biotin carboxylase (BC) and biotin carboxyl carrier protein (BCCP) domains, and AccD5, which contains the carboxyl transferase (CT) domain.

The enzyme catalyses N(6)-carboxybiotinyl-L-lysyl-[protein] + acetyl-CoA = N(6)-biotinyl-L-lysyl-[protein] + malonyl-CoA. The catalysed reaction is N(6)-carboxybiotinyl-L-lysyl-[protein] + propanoyl-CoA = methylmalonyl-CoA + N(6)-biotinyl-L-lysyl-[protein]. Its pathway is lipid metabolism; mycolic acid biosynthesis. Its function is as follows. Component of a biotin-dependent acyl-CoA carboxylase complex. This subunit transfers the CO2 from carboxybiotin to the CoA ester substrate. When associated with the alpha3 subunit AccA3, is involved in the carboxylation of acetyl-CoA and propionyl-CoA. The chain is Biotin-dependent acetyl-/propionyl-coenzyme A carboxylase beta5 subunit (accD5) from Mycobacterium leprae (strain TN).